We begin with the raw amino-acid sequence, 509 residues long: Cytochrome P450 monooxygenase alt3 (509 aa).

A helical transmembrane segment spans residues 25–45; that stretch reads IITGIIVLPVLYVLLKVIYNL. Cys-450 provides a ligand contact to heme.

The protein belongs to the cytochrome P450 family. The cofactor is heme.

The protein resides in the membrane. It participates in secondary metabolite biosynthesis. Its function is as follows. Cytochrome P450 monooxygenase; part of the gene cluster that mediates the biosynthesis of alternapyrone derivatives. Alternapyrone is a decaketide with octa-methylation from methionine on every C2 unit except the third unit. All the domains in the polyketide synthase alt5 are apparently involved in alternapyrone synthesis, that is, the 8 CMeT, 7 KR, 7 DH, and 4 ER reactions in the 9 KS-mediated condensation steps required for alternapyrone synthesis. the alternapyrone produced by alt5 might be intensively modified by cytochrome P450 monooxygenases alt1, alt2 and alt3 and FAD-dependent oxidoreductase alt4 present in the alt gene cluster. The protein is Cytochrome P450 monooxygenase alt3 of Alternaria solani.